We begin with the raw amino-acid sequence, 214 residues long: Urease accessory protein UreG 2 (214 aa).

Position 22 to 29 (22 to 29) interacts with GTP; that stretch reads GPVGSGKT.

The protein belongs to the SIMIBI class G3E GTPase family. UreG subfamily. As to quaternary structure, homodimer. UreD, UreF and UreG form a complex that acts as a GTP-hydrolysis-dependent molecular chaperone, activating the urease apoprotein by helping to assemble the nickel containing metallocenter of UreC. The UreE protein probably delivers the nickel.

The protein localises to the cytoplasm. In terms of biological role, facilitates the functional incorporation of the urease nickel metallocenter. This process requires GTP hydrolysis, probably effectuated by UreG. The protein is Urease accessory protein UreG 2 of Bradyrhizobium sp. (strain BTAi1 / ATCC BAA-1182).